The sequence spans 104 residues: Small ribosomal subunit protein uS10 (104 aa).

It belongs to the universal ribosomal protein uS10 family. As to quaternary structure, part of the 30S ribosomal subunit.

Its function is as follows. Involved in the binding of tRNA to the ribosomes. This chain is Small ribosomal subunit protein uS10, found in Nitrosococcus oceani (strain ATCC 19707 / BCRC 17464 / JCM 30415 / NCIMB 11848 / C-107).